Reading from the N-terminus, the 142-residue chain is Putative transcriptional regulatory protein Mevan_1098 (142 aa).

It belongs to the Tfx family.

Functionally, putative transcriptional regulator. This Methanococcus vannielii (strain ATCC 35089 / DSM 1224 / JCM 13029 / OCM 148 / SB) protein is Putative transcriptional regulatory protein Mevan_1098.